We begin with the raw amino-acid sequence, 25 residues long: Caerin-1.19 (25 aa).

Leu-25 is subject to Leucine amide.

The protein belongs to the frog skin active peptide (FSAP) family. Caerin subfamily. In terms of tissue distribution, expressed by the skin dorsal glands.

The protein localises to the secreted. In terms of biological role, caerin-1.19 shows significant activity against Gram-positive organisms, but is less effective against Gram-negative organisms. This Ranoidea gracilenta (Dainty green tree frog) protein is Caerin-1.19.